A 151-amino-acid chain; its full sequence is Large ribosomal subunit protein bL9 (151 aa).

This sequence belongs to the bacterial ribosomal protein bL9 family.

In terms of biological role, binds to the 23S rRNA. The protein is Large ribosomal subunit protein bL9 of Bordetella petrii (strain ATCC BAA-461 / DSM 12804 / CCUG 43448).